A 120-amino-acid chain; its full sequence is Prefoldin subunit beta (120 aa).

The protein belongs to the prefoldin subunit beta family. As to quaternary structure, heterohexamer of two alpha and four beta subunits.

It is found in the cytoplasm. In terms of biological role, molecular chaperone capable of stabilizing a range of proteins. Seems to fulfill an ATP-independent, HSP70-like function in archaeal de novo protein folding. The protein is Prefoldin subunit beta of Methanospirillum hungatei JF-1 (strain ATCC 27890 / DSM 864 / NBRC 100397 / JF-1).